Here is a 229-residue protein sequence, read N- to C-terminus: Cytidylate kinase (229 aa).

ATP is bound at residue 12–20 (GPSGVGKST).

This sequence belongs to the cytidylate kinase family. Type 1 subfamily.

The protein resides in the cytoplasm. The catalysed reaction is CMP + ATP = CDP + ADP. The enzyme catalyses dCMP + ATP = dCDP + ADP. In Mesomycoplasma hyopneumoniae (strain 232) (Mycoplasma hyopneumoniae), this protein is Cytidylate kinase.